The chain runs to 1566 residues: Arginine-glutamic acid dipeptide repeats protein (1566 aa).

Residues 1–36 (MTADKDKDKDKEKDRDRDRDREREKRDKARESENSR) show a composition bias toward basic and acidic residues. The segment at 1 to 90 (MTADKDKDKD…KKKSRYERTD (90 aa)) is disordered. Residues S53 and S56 each carry the phosphoserine modification. Positions 74–85 (KNKKKPPKKKSR) are enriched in basic residues. In terms of domain architecture, BAH spans 103–283 (VVYRPGDCVY…PETRRLNSTQ (181 aa)). Residue T120 is modified to Phosphothreonine. Phosphoserine occurs at positions 142 and 304. One can recognise an ELM2 domain in the interval 284–387 (GEIRVGPSHQ…KALQRLVKKP (104 aa)). The SANT domain occupies 391–443 (LIEKCWTEDEVKRFVKGLRQYGKNFFRIRKELLPNKETGELITFYYYWKKTPE). The interval 464–495 (TRTASTPVNTPSRPPSSEFLDLSSASEDDFDS) is disordered. The segment covering 465–474 (RTASTPVNTP) has biased composition (polar residues). The segment covering 479–488 (SSEFLDLSSA) has biased composition (low complexity). Residues 507–532 (CRHCFTTTSKDWHHGGRENILLCTDC) form a GATA-type zinc finger. The disordered stretch occupies residues 542–1133 (LPPIEKPVDP…PSHASQSARF (592 aa)). Residue K560 forms a Glycyl lysine isopeptide (Lys-Gly) (interchain with G-Cter in SUMO2) linkage. Phosphoserine is present on residues S594, S600, and S613. The span at 609-623 (SGRNSPSAASTSSND) shows a compositional bias: low complexity. Basic and acidic residues predominate over residues 624–640 (SKAETVKKSAKKVKEEA). K637 is covalently cross-linked (Glycyl lysine isopeptide (Lys-Gly) (interchain with G-Cter in SUMO2)). Phosphoserine occurs at positions 642, 656, 675, and 679. Positions 652-673 (EKVASDTEEADRTSSKKTKTQE) are enriched in basic and acidic residues. Over residues 688–708 (SDSRSVNDEGSSDPKDIDQDN) the composition is skewed to basic and acidic residues. The segment covering 709-720 (RSTSPSIPSPQD) has biased composition (polar residues). The span at 726–751 (DSSAQQQMLQAQPPALQAPTGVTPAP) shows a compositional bias: low complexity. Residues 752-767 (SSAPPGTPQLPTPGPT) are compositionally biased toward pro residues. Low complexity predominate over residues 778 to 796 (SPTASQAPNQPQAPTAPVP). Residues 809 to 827 (QRPPSPHPPPHPSPHPPLQ) show a composition bias toward pro residues. A compositionally biased stretch (polar residues) spans 829–840 (LTGSAGQPSAPS). 2 stretches are compositionally biased toward low complexity: residues 843 to 865 (QPPL…LLQH) and 897 to 913 (SLQL…QQPP). Over residues 914–940 (REQPLPPAPLAMPHIKPPPTTPIPQLP) the composition is skewed to pro residues. A compositionally biased stretch (low complexity) spans 970-980 (KPLSSLSTHHP). Over residues 1030–1052 (PQPPFAQHPFVPGGPPPITPPTC) the composition is skewed to pro residues. Residues 1053–1085 (PSTSTPPAGPGTSAQPPCSGAAASGGSIAGGSS) show a composition bias toward low complexity. Phosphoserine occurs at positions 1106, 1113, and 1115. Pro residues predominate over residues 1106-1117 (SPPPPPRSPSPE). T1119 is modified (phosphothreonine). Residues 1156–1211 (GSKLAKKREEAIEKAKREAEQKAREEREREKEKEKEREREREREREAERAAKASSS) adopt a coiled-coil conformation. K1158 carries the post-translational modification N6-acetyllysine. Positions 1162 to 1206 (KREEAIEKAKREAEQKAREEREREKEKEKEREREREREREAERAA) are enriched in basic and acidic residues. A disordered region spans residues 1162-1246 (KREEAIEKAK…TTIAAVPPYI (85 aa)). Y1259 is modified (phosphotyrosine). S1266 bears the Phosphoserine mark.

In terms of assembly, interacts with HDAC1. Interacts with ATN1. Interaction with ATN1 is improved when the poly-Gln region of ATN1 is extended. Interacts with FAT1. As to expression, widely expressed. Expressed in tumor cell lines.

Its subcellular location is the nucleus. Functionally, plays a role as a transcriptional repressor during development. May play a role in the control of cell survival. Overexpression of RERE recruits BAX to the nucleus particularly to POD and triggers caspase-3 activation, leading to cell death. The polypeptide is Arginine-glutamic acid dipeptide repeats protein (RERE) (Homo sapiens (Human)).